Reading from the N-terminus, the 423-residue chain is Glucose-6-phosphate isomerase (423 aa).

E279 acts as the Proton donor in catalysis. Catalysis depends on residues H300 and K413.

This sequence belongs to the GPI family.

It localises to the cytoplasm. The catalysed reaction is alpha-D-glucose 6-phosphate = beta-D-fructose 6-phosphate. The protein operates within carbohydrate biosynthesis; gluconeogenesis. It participates in carbohydrate degradation; glycolysis; D-glyceraldehyde 3-phosphate and glycerone phosphate from D-glucose: step 2/4. Catalyzes the reversible isomerization of glucose-6-phosphate to fructose-6-phosphate. This chain is Glucose-6-phosphate isomerase, found in Acholeplasma laidlawii (strain PG-8A).